Consider the following 444-residue polypeptide: Argininosuccinate synthase (444 aa).

ATP is bound by residues 18-26 (AFSGGLDTS) and alanine 44. Tyrosine 100 provides a ligand contact to L-citrulline. ATP is bound by residues glycine 130 and threonine 132. 3 residues coordinate L-aspartate: threonine 132, asparagine 136, and aspartate 137. Asparagine 136 provides a ligand contact to L-citrulline. Aspartate 137 serves as a coordination point for ATP. 2 residues coordinate L-citrulline: arginine 140 and serine 193. Aspartate 195 contacts ATP. The L-citrulline site is built by threonine 202, glutamate 204, and glutamate 281.

It belongs to the argininosuccinate synthase family. Type 2 subfamily. In terms of assembly, homotetramer.

The protein localises to the cytoplasm. It carries out the reaction L-citrulline + L-aspartate + ATP = 2-(N(omega)-L-arginino)succinate + AMP + diphosphate + H(+). The protein operates within amino-acid biosynthesis; L-arginine biosynthesis; L-arginine from L-ornithine and carbamoyl phosphate: step 2/3. This is Argininosuccinate synthase from Haemophilus influenzae (strain PittEE).